Here is a 920-residue protein sequence, read N- to C-terminus: Disintegrin and metalloproteinase domain-containing protein 19 (920 aa).

An N-terminal signal peptide occupies residues 1–26 (MPGRAGVARFCLLALALQLHWPLAAC). Positions 27–204 (EPGWTTRGSQ…TKKQPRRMKR (178 aa)) are excised as a propeptide. Topologically, residues 27–703 (EPGWTTRGSQ…VDSGPLPPKS (677 aa)) are extracellular. The short motif at 131 to 138 (STCRGIRG) is the Cysteine switch element. Position 133 (Cys133) interacts with Zn(2+). Asn145 is a glycosylation site (N-linked (GlcNAc...) asparagine). The region spanning 211–409 (KYVELYLVAD…GGGMCLSNMP (199 aa)) is the Peptidase M12B domain. 3 disulfide bridges follow: Cys321–Cys404, Cys361–Cys388, and Cys362–Cys371. His346 serves as a coordination point for Zn(2+). The active site involves Glu347. The Zn(2+) site is built by His350 and His356. One can recognise a Disintegrin domain in the interval 417–503 (GRRCGNGYLE…HCPTNYYQMD (87 aa)). Asn445 and Asn448 each carry an N-linked (GlcNAc...) asparagine glycan. A disulfide bridge connects residues Cys475 and Cys495. N-linked (GlcNAc...) asparagine glycosylation is present at Asn649. In terms of domain architecture, EGF-like spans 654–686 (ETEGCGKKCNGHGVCNNNKNCHCFPGWSPPFCN). Intrachain disulfides connect Cys658–Cys668, Cys662–Cys674, and Cys676–Cys685. A helical membrane pass occupies residues 704-724 (VGPVIAGVFSALFVLAVLVLL). Over 725–920 (CHCYRQSHKL…RVGAIISSKI (196 aa)) the chain is Cytoplasmic. Positions 755 to 920 (SQSGGTGHAN…RVGAIISSKI (166 aa)) are disordered. The segment covering 767–783 (FKLQTPQGKRKVTNTPE) has biased composition (polar residues). Residues 825–834 (ARIERKESAR) are compositionally biased toward basic and acidic residues. The SH3-binding motif lies at 835–846 (RPPPSRPMPPAP). 2 stretches are compositionally biased toward pro residues: residues 835–846 (RPPPSRPMPPAP) and 888–903 (TSGP…PVPK).

Interacts with SH3PXD2A. Zn(2+) serves as cofactor. The precursor is cleaved by a furin endopeptidase. In terms of tissue distribution, widely expressed, with the highest expression in bone, heart and lung, followed by brain and spleen and relatively low expression in liver, skeletal muscle, kidney and testis. In bone, primarily expressed in cell of the osteoblast lineage and not detected in mature osteoclasts.

It is found in the membrane. In terms of biological role, participates in the proteolytic processing of beta-type neuregulin isoforms which are involved in neurogenesis and synaptogenesis, suggesting a regulatory role in glial cell. Also cleaves alpha-2 macroglobulin. May be involved in osteoblast differentiation and/or osteoblast activity in bone. This is Disintegrin and metalloproteinase domain-containing protein 19 (Adam19) from Mus musculus (Mouse).